A 650-amino-acid chain; its full sequence is Putative polypeptide N-acetylgalactosaminyltransferase 9 (650 aa).

Over 1-11 (MAFIWRRRSTT) the chain is Cytoplasmic. Residues 12 to 31 (IVKLVAFALAIWFCIAFLVY) traverse the membrane as a helical; Signal-anchor for type II membrane protein segment. At 32–650 (TDDTRRRAAQ…TLENYDSSKL (619 aa)) the chain is on the lumenal side. The interval 84-154 (NVIGGGGQKQ…NPGELGKPVR (71 aa)) is disordered. The segment covering 107-136 (HKADLQAERMRKKAAEQPKKKPQEDSKKVI) has biased composition (basic and acidic residues). 5 disulfides stabilise this stretch: cysteine 198/cysteine 432, cysteine 423/cysteine 499, cysteine 535/cysteine 554, cysteine 577/cysteine 590, and cysteine 616/cysteine 631. Residues 208-317 (LPKTDVIICF…EGWLEPLLDR (110 aa)) are catalytic subdomain A. The substrate site is built by cysteine 216, aspartate 249, and arginine 278. Aspartate 301 contributes to the Mn(2+) binding site. Substrate-binding residues include serine 302 and histidine 303. Histidine 303 serves as a coordination point for Mn(2+). 2 N-linked (GlcNAc...) asparagine glycosylation sites follow: asparagine 321 and asparagine 373. Residues 378–440 (PVYSPTMAGG…PCSHVGHIFR (63 aa)) are catalytic subdomain B. Histidine 437 contributes to the Mn(2+) binding site. Residues arginine 440 and tyrosine 445 each coordinate substrate. The Ricin B-type lectin domain maps to 521-643 (AHGEIRNLGY…SLSRQQWTLE (123 aa)).

Belongs to the glycosyltransferase 2 family. GalNAc-T subfamily. Isoform A forms homotetramer. Isoform B forms homodimer. Mn(2+) is required as a cofactor.

The protein resides in the golgi apparatus membrane. The enzyme catalyses L-seryl-[protein] + UDP-N-acetyl-alpha-D-galactosamine = a 3-O-[N-acetyl-alpha-D-galactosaminyl]-L-seryl-[protein] + UDP + H(+). The catalysed reaction is L-threonyl-[protein] + UDP-N-acetyl-alpha-D-galactosamine = a 3-O-[N-acetyl-alpha-D-galactosaminyl]-L-threonyl-[protein] + UDP + H(+). Its pathway is protein modification; protein glycosylation. In terms of biological role, catalyzes the initial reaction in O-linked oligosaccharide biosynthesis, the transfer of an N-acetyl-D-galactosamine residue to a serine or threonine residue on the protein receptor. It can both act as a peptide transferase that transfers GalNAc onto unmodified peptide substrates, and as a glycopeptide transferase that requires the prior addition of a GalNAc on a peptide before adding additional GalNAc moieties. Functionally, N-acetylgalactosaminyltransferase which preferentially O-glycosylates negatively charge substrates. O-glycosylates mucin-like protein Sgs3 in the salivary gland but to a lesser extent than isoform B. By regulating the O-glycosylation of secretory cargo proteins plays a role in the morphology and maturation of salivary gland secretory granules. Its function is as follows. N-acetylgalactosaminyltransferase which preferentially O-glycosylates positively charge substrates. O-glycosylates mucin-like protein Sgs3 in the salivary gland. By regulating the O-glycosylation of secretory cargo proteins, plays a role in the morphology and maturation of salivary gland secretory granules. This Drosophila melanogaster (Fruit fly) protein is Putative polypeptide N-acetylgalactosaminyltransferase 9.